The sequence spans 155 residues: Small ribosomal subunit protein uS7c (155 aa).

The protein belongs to the universal ribosomal protein uS7 family. In terms of assembly, part of the 30S ribosomal subunit.

It localises to the plastid. Its subcellular location is the chloroplast. Functionally, one of the primary rRNA binding proteins, it binds directly to 16S rRNA where it nucleates assembly of the head domain of the 30S subunit. This is Small ribosomal subunit protein uS7c (rps7) from Dioscorea bulbifera (Air potato).